The sequence spans 188 residues: CMT1A duplicated region transcript 15 protein (188 aa).

Expressed in fetal heart, kidney, liver, lung and spleen.

The protein is CMT1A duplicated region transcript 15 protein (CDRT15) of Homo sapiens (Human).